The chain runs to 517 residues: Aspartyl/glutamyl-tRNA(Asn/Gln) amidotransferase subunit B (517 aa).

This sequence belongs to the GatB/GatE family. GatB subfamily. In terms of assembly, heterotrimer of A, B and C subunits.

It carries out the reaction L-glutamyl-tRNA(Gln) + L-glutamine + ATP + H2O = L-glutaminyl-tRNA(Gln) + L-glutamate + ADP + phosphate + H(+). The catalysed reaction is L-aspartyl-tRNA(Asn) + L-glutamine + ATP + H2O = L-asparaginyl-tRNA(Asn) + L-glutamate + ADP + phosphate + 2 H(+). Allows the formation of correctly charged Asn-tRNA(Asn) or Gln-tRNA(Gln) through the transamidation of misacylated Asp-tRNA(Asn) or Glu-tRNA(Gln) in organisms which lack either or both of asparaginyl-tRNA or glutaminyl-tRNA synthetases. The reaction takes place in the presence of glutamine and ATP through an activated phospho-Asp-tRNA(Asn) or phospho-Glu-tRNA(Gln). The sequence is that of Aspartyl/glutamyl-tRNA(Asn/Gln) amidotransferase subunit B from Thermobifida fusca (strain YX).